The chain runs to 274 residues: Large ribosomal subunit protein uL2 (274 aa).

Residues 223-264 (VAMNPVDHPHGGGEGRTSGGRHPVSPWGVPTKGYKTRSNKRT) form a disordered region.

Belongs to the universal ribosomal protein uL2 family. As to quaternary structure, part of the 50S ribosomal subunit. Forms a bridge to the 30S subunit in the 70S ribosome.

One of the primary rRNA binding proteins. Required for association of the 30S and 50S subunits to form the 70S ribosome, for tRNA binding and peptide bond formation. It has been suggested to have peptidyltransferase activity; this is somewhat controversial. Makes several contacts with the 16S rRNA in the 70S ribosome. This chain is Large ribosomal subunit protein uL2, found in Shewanella denitrificans (strain OS217 / ATCC BAA-1090 / DSM 15013).